We begin with the raw amino-acid sequence, 469 residues long: 3-isopropylmalate dehydratase large subunit (469 aa).

[4Fe-4S] cluster-binding residues include Cys-350, Cys-410, and Cys-413.

This sequence belongs to the aconitase/IPM isomerase family. LeuC type 1 subfamily. As to quaternary structure, heterodimer of LeuC and LeuD. It depends on [4Fe-4S] cluster as a cofactor.

It carries out the reaction (2R,3S)-3-isopropylmalate = (2S)-2-isopropylmalate. It functions in the pathway amino-acid biosynthesis; L-leucine biosynthesis; L-leucine from 3-methyl-2-oxobutanoate: step 2/4. In terms of biological role, catalyzes the isomerization between 2-isopropylmalate and 3-isopropylmalate, via the formation of 2-isopropylmaleate. The chain is 3-isopropylmalate dehydratase large subunit from Rhizobium johnstonii (strain DSM 114642 / LMG 32736 / 3841) (Rhizobium leguminosarum bv. viciae).